A 622-amino-acid polypeptide reads, in one-letter code: Low affinity potassium transport system protein Kup (622 aa).

12 consecutive transmembrane segments (helical) span residues 9–29 (LPAI…TSPL), 49–69 (VFGF…IKYL), 103–123 (VIMG…TPAI), 137–157 (PQLD…LFMI), 165–185 (VGKL…VLGL), 213–233 (VSFI…ALYA), 247–267 (WFTV…ALLL), 276–296 (PFFL…AALA), 337–357 (IYIP…IVSF), 363–383 (LAAA…ILST), 396–416 (FVAL…SANL), and 419–439 (LLSG…IMTT).

Belongs to the HAK/KUP transporter (TC 2.A.72) family.

The protein localises to the cell inner membrane. It catalyses the reaction K(+)(in) + H(+)(in) = K(+)(out) + H(+)(out). Responsible for the low-affinity transport of potassium into the cell. Likely operates as a K(+):H(+) symporter. The polypeptide is Low affinity potassium transport system protein Kup (Salmonella typhi).